Here is a 38-residue protein sequence, read N- to C-terminus: Beta-galactosidase (38 aa).

The protein belongs to the glycosyl hydrolase 35 family. Heterodimer of a large and a small subunit. Post-translationally, the small subunit is N-glycosylated.

The catalysed reaction is Hydrolysis of terminal non-reducing beta-D-galactose residues in beta-D-galactosides.. Involved in cell wall degradation. Degrades polysaccharides containing beta-(1--&gt;4)-linked galactans, acting as an exo-(1--&gt;4)-beta-D-galactanase. This is Beta-galactosidase from Hordeum vulgare (Barley).